Reading from the N-terminus, the 277-residue chain is Ribosomally synthesized cyclic peptide asperipin-2a precursor aprA (277 aa).

The N-terminal stretch at Met-1 to Ala-19 is a signal peptide. 12 consecutive propeptides follow at residues Leu-20 to Arg-69, Lys-76 to Arg-88, Lys-95 to Arg-107, Lys-114 to Arg-126, Lys-133 to Arg-145, Lys-152 to Arg-164, Lys-171 to Arg-183, Lys-190 to Arg-202, Lys-209 to Arg-221, Lys-228 to Arg-240, Lys-247 to Arg-259, and Lys-266 to Lys-277.

In terms of processing, aprA is processed by kexin proteases to produce 11 identical copies of the hexapeptide Phe-Tyr-Tyr-Thr-Gly-Tyr, that is further modified aprY and aprR to yield asperipin-2a. The bicyclic structure of asperipin-2a is likely synthesized by the single ustYa family oxidase aprY. The reductase aprR may be required for the final reduction to yield asperipin-2a.

It participates in secondary metabolite biosynthesis. Its function is as follows. Ribosomally synthesized cyclic peptide asperipin-2a precursor; part of the gene cluster that mediates the biosynthesis of the asperipin-2a, a bicyclic peptide that possesses two macrocyclic ether rings consisting of 14- and 17-membered paracyclophans. The aprA translated product contains a 11-fold repeated peptide embedding the hexapeptide Phe-Tyr-Tyr-Thr-Gly-Tyr, that is converted into asperipin-2a. After being excised from the precursor peptide by kexin proteases, the core peptides are cyclized and modified post-translationally by enzymes encoded within the corresponding gene cluster. The sequence is that of Ribosomally synthesized cyclic peptide asperipin-2a precursor aprA from Aspergillus flavus (strain ATCC 200026 / FGSC A1120 / IAM 13836 / NRRL 3357 / JCM 12722 / SRRC 167).